A 441-amino-acid chain; its full sequence is Synaptotagmin-1 (441 aa).

The Vesicular segment spans residues 1–69 (MVKLDFSSQD…DVVKEKVMQQ (69 aa)). The helical transmembrane segment at 70–96 (TGMPEWAFVFLGFVFILLVLACAFCLI) threads the bilayer. At 97 to 441 (RKLFGKKRHG…EEGDKKDDKK (345 aa)) the chain is on the cytoplasmic side. 2 C2 domains span residues 159 to 278 (KLGR…EEWK) and 292 to 425 (SLGD…AQWH). Asp-190, Asp-196, Asp-248, Phe-249, Asp-250, Ser-253, Lys-254, Asp-256, Asp-323, Asp-329, Asp-383, Asp-385, and Asp-391 together coordinate Ca(2+).

It belongs to the synaptotagmin family. Ca(2+) serves as cofactor. In terms of tissue distribution, localized to regions known to be rich in synapses and appears to be associated with synaptic vesicles. Also found in some non-neuronal secretory structures.

Its subcellular location is the cytoplasmic vesicle. The protein resides in the secretory vesicle. It localises to the synaptic vesicle membrane. The protein localises to the synapse. Its function is as follows. May have a regulatory role in the membrane interactions during trafficking of synaptic vesicles at the active zone of the synapse. It binds acidic phospholipids with a specificity that requires the presence of both an acidic head group and a diacyl backbone. Involved in necrotic cell death. The sequence is that of Synaptotagmin-1 (snt-1) from Caenorhabditis elegans.